The chain runs to 377 residues: Ferric enterobactin transport protein FepE (377 aa).

At 1-41 (MSSLNIKQGSDAHFPDYPLASPSNNEIDLLNLISVLWRAKK) the chain is on the cytoplasmic side. Residues 42 to 62 (TVMAVVFAFACAGLLISFILP) traverse the membrane as a helical segment. Topologically, residues 63 to 338 (QKWTSAAVVT…LPVKKDGPGK (276 aa)) are periplasmic. Residues 339–359 (AIIVILSALIGGMVACGGVLL) traverse the membrane as a helical segment. Topologically, residues 360 to 377 (RYAMASRKQDAMMADHLV) are cytoplasmic.

It belongs to the WzzB/Cld/Rol family.

The protein resides in the cell inner membrane. Its function is as follows. Part of the ferric enterobactin transport system. This chain is Ferric enterobactin transport protein FepE (fepE), found in Escherichia coli (strain K12).